A 533-amino-acid chain; its full sequence is DnaJ homolog subfamily C member 21 (533 aa).

In terms of domain architecture, J spans 3 to 70; sequence CHYEALGVRR…ERAWYDNHRE (68 aa). 3 disordered regions span residues 278–311, 327–473, and 503–533; these read QFGD…AELY, KAMR…RVPA, and KATG…RKNR. A phosphoserine mark is found at Ser283 and Ser302. A compositionally biased stretch (basic and acidic residues) spans 291–302; it reads QELRDGQDGKDS. The segment at 315–339 adopts a C2H2-type 1 zinc-finger fold; it reads YCPACDKSFKTEKAMRNHEKSKKHR. Positions 357-369 are enriched in polar residues; sequence SGPQTDENSLNAN. Ser370 is subject to Phosphoserine. Residues 381–392 are compositionally biased toward basic residues; the sequence is KLSRKQKKKKQK. Residues 393 to 403 are compositionally biased toward polar residues; it reads PAQNYDDNFNE. The span at 455 to 464 shows a compositional bias: basic residues; it reads SKPKGKKAKD. Residues 484–508 form a C2H2-type 2 zinc finger; the sequence is SCTTCHSEFPSRNKLFDHLKATGHA. Ser512 carries the phosphoserine modification. Residues 512–523 are compositionally biased toward low complexity; the sequence is SSSTSLNSVTNS. Over residues 524 to 533 the composition is skewed to basic residues; it reads RNKKEKRKNR.

Interacts with HSPA8, PA2G4 and ZNF622.

It localises to the cytoplasm. Its subcellular location is the nucleus. It is found in the nucleolus. Functionally, may act as a co-chaperone for HSP70. May play a role in ribosomal RNA (rRNA) biogenesis, possibly in the maturation of the 60S subunit. Binds the precursor 45S rRNA. The polypeptide is DnaJ homolog subfamily C member 21 (DNAJC21) (Bos taurus (Bovine)).